Here is a 512-residue protein sequence, read N- to C-terminus: 2-isopropylmalate synthase (512 aa).

Residues 5 to 268 form the Pyruvate carboxyltransferase domain; the sequence is LIIFDTTLRD…DVDIETQHIL (264 aa). Positions 14, 202, 204, and 239 each coordinate Mn(2+). Residues 394 to 512 form a regulatory domain region; it reads SFVSLSQHSE…SKADRVAAQG (119 aa).

The protein belongs to the alpha-IPM synthase/homocitrate synthase family. LeuA type 1 subfamily. As to quaternary structure, homodimer. It depends on Mn(2+) as a cofactor.

It localises to the cytoplasm. The enzyme catalyses 3-methyl-2-oxobutanoate + acetyl-CoA + H2O = (2S)-2-isopropylmalate + CoA + H(+). It functions in the pathway amino-acid biosynthesis; L-leucine biosynthesis; L-leucine from 3-methyl-2-oxobutanoate: step 1/4. In terms of biological role, catalyzes the condensation of the acetyl group of acetyl-CoA with 3-methyl-2-oxobutanoate (2-ketoisovalerate) to form 3-carboxy-3-hydroxy-4-methylpentanoate (2-isopropylmalate). This is 2-isopropylmalate synthase from Albidiferax ferrireducens (strain ATCC BAA-621 / DSM 15236 / T118) (Rhodoferax ferrireducens).